A 441-amino-acid chain; its full sequence is Amino-acid acetyltransferase (441 aa).

One can recognise an N-acetyltransferase domain in the interval 295 to 434 (EKVRGAGIDD…KALYNFQRRS (140 aa)).

It belongs to the acetyltransferase family. ArgA subfamily.

It is found in the cytoplasm. The catalysed reaction is L-glutamate + acetyl-CoA = N-acetyl-L-glutamate + CoA + H(+). It functions in the pathway amino-acid biosynthesis; L-arginine biosynthesis; N(2)-acetyl-L-ornithine from L-glutamate: step 1/4. The protein is Amino-acid acetyltransferase of Photobacterium profundum (strain SS9).